The primary structure comprises 37 residues: Large ribosomal subunit protein bL36 (37 aa).

The protein belongs to the bacterial ribosomal protein bL36 family.

This is Large ribosomal subunit protein bL36 from Prochlorococcus marinus (strain MIT 9303).